The primary structure comprises 342 residues: Uroporphyrinogen decarboxylase (342 aa).

Substrate is bound by residues 22–26, Phe-42, Asp-72, Tyr-146, Ser-201, and His-317; that span reads RQAGR.

This sequence belongs to the uroporphyrinogen decarboxylase family. Homodimer.

Its subcellular location is the cytoplasm. The catalysed reaction is uroporphyrinogen III + 4 H(+) = coproporphyrinogen III + 4 CO2. The protein operates within porphyrin-containing compound metabolism; protoporphyrin-IX biosynthesis; coproporphyrinogen-III from 5-aminolevulinate: step 4/4. Its function is as follows. Catalyzes the decarboxylation of four acetate groups of uroporphyrinogen-III to yield coproporphyrinogen-III. The protein is Uroporphyrinogen decarboxylase of Orientia tsutsugamushi (strain Ikeda) (Rickettsia tsutsugamushi).